The primary structure comprises 317 residues: tRNA dimethylallyltransferase (317 aa).

ATP is bound at residue 16–23; sequence GPTASGKS. 18 to 23 is a binding site for substrate; that stretch reads TASGKS. 3 interaction with substrate tRNA regions span residues 41 to 44, 165 to 169, and 247 to 252; these read DSAQ, QRIQR, and RCVGYR.

It belongs to the IPP transferase family. In terms of assembly, monomer. Mg(2+) is required as a cofactor.

It carries out the reaction adenosine(37) in tRNA + dimethylallyl diphosphate = N(6)-dimethylallyladenosine(37) in tRNA + diphosphate. Functionally, catalyzes the transfer of a dimethylallyl group onto the adenine at position 37 in tRNAs that read codons beginning with uridine, leading to the formation of N6-(dimethylallyl)adenosine (i(6)A). The protein is tRNA dimethylallyltransferase of Nitrosomonas europaea (strain ATCC 19718 / CIP 103999 / KCTC 2705 / NBRC 14298).